Reading from the N-terminus, the 586-residue chain is GRB2-associated-binding protein 3 (586 aa).

Positions 5 to 117 (DAVCTGWLVK…WVHSISQVCN (113 aa)) constitute a PH domain. Disordered stretches follow at residues 149–171 (AHAA…TEET) and 281–335 (SSTI…KKPE). The segment covering 283 to 292 (TIQVDKNQGS) has biased composition (polar residues). Residues 316-326 (HLSERRQEEWS) show a composition bias toward basic and acidic residues. S344 is subject to Phosphoserine. Positions 401–453 (GASGLGPHCSPDDYIPMNSGSISSPLPELPANLEPPPVNRDLKPQRKSRPPPL) are disordered. The residue at position 482 (S482) is a Phosphoserine.

It belongs to the GAB family. In terms of assembly, interacts with PIK3R/p85, SHP2 and GRAP2/MONA. May interact with Grb2. Post-translationally, phosphorylated on tyrosine residue(s) after macrophage colony-stimulating factor (M-CSF) receptor stimulation.

The chain is GRB2-associated-binding protein 3 (GAB3) from Homo sapiens (Human).